A 506-amino-acid polypeptide reads, in one-letter code: DEAD-box ATP-dependent RNA helicase CshA (506 aa).

A Q motif motif is present at residues 2 to 30 (QNFKELGISDNTVQSLESMGFKEPTPIQK). A Helicase ATP-binding domain is found at 33 to 203 (IPYALQGIDI…QQFMKSPKII (171 aa)). Position 46-53 (46-53 (AQTGTGKT)) interacts with ATP. The DEAD box motif lies at 150–153 (DEAD). The 162-residue stretch at 214–375 (QIEEFYTIVK…LRPPHRKEVL (162 aa)) folds into the Helicase C-terminal domain. Residues 436-506 (EKPLSRKGRN…KGRTFADHQK (71 aa)) form a disordered region. Residues 468 to 480 (KRSKGYSSKKKST) are compositionally biased toward basic residues.

The protein belongs to the DEAD box helicase family. CshA subfamily. As to quaternary structure, oligomerizes, may be a member of the RNA degradosome.

The protein localises to the cytoplasm. It carries out the reaction ATP + H2O = ADP + phosphate + H(+). In terms of biological role, DEAD-box RNA helicase possibly involved in RNA degradation. Unwinds dsRNA in both 5'- and 3'-directions, has RNA-dependent ATPase activity. The sequence is that of DEAD-box ATP-dependent RNA helicase CshA from Staphylococcus aureus (strain MRSA252).